The chain runs to 347 residues: GMP reductase (347 aa).

Residue 108-131 (ADFEKTKQILDLNPALNFVCIDVA) coordinates NADP(+). 2 residues coordinate K(+): Gly181 and Gly183. Cys186 (thioimidate intermediate) is an active-site residue. 216–239 (IVSDGGCTTPGDVAKAFGGGADFV) serves as a coordination point for NADP(+).

The protein belongs to the IMPDH/GMPR family. GuaC type 1 subfamily. In terms of assembly, homotetramer.

The catalysed reaction is IMP + NH4(+) + NADP(+) = GMP + NADPH + 2 H(+). In terms of biological role, catalyzes the irreversible NADPH-dependent deamination of GMP to IMP. It functions in the conversion of nucleobase, nucleoside and nucleotide derivatives of G to A nucleotides, and in maintaining the intracellular balance of A and G nucleotides. This chain is GMP reductase, found in Escherichia coli (strain SMS-3-5 / SECEC).